The following is a 798-amino-acid chain: Metabotropic glutamate receptor-like protein A (798 aa).

The signal sequence occupies residues M1 to S23. Topologically, residues L24–L388 are extracellular. Residues N186, N275, and N320 are each glycosylated (N-linked (GlcNAc...) asparagine). The chain crosses the membrane as a helical span at residues T389–F409. The Cytoplasmic segment spans residues R410–S419. A helical membrane pass occupies residues P420 to F440. Residues S441–G447 are Extracellular-facing. Residues I448–L468 form a helical membrane-spanning segment. The Cytoplasmic portion of the chain corresponds to V469–Y494. A helical transmembrane segment spans residues P495 to G515. Over D516–V545 the chain is Extracellular. A helical transmembrane segment spans residues A546–F566. The Cytoplasmic segment spans residues K567–K580. Residues P581–V601 form a helical membrane-spanning segment. Over S602–Q609 the chain is Extracellular. The chain crosses the membrane as a helical span at residues V610–G630. The Cytoplasmic portion of the chain corresponds to S631–V798. Residues A714–K771 adopt a coiled-coil conformation. Residues E752–E774 are compositionally biased toward basic and acidic residues. Positions E752–V798 are disordered.

In the N-terminal section; belongs to the BMP lipoprotein family. It in the C-terminal section; belongs to the G-protein coupled receptor 3 family. GABA-B receptor subfamily.

The protein resides in the membrane. It localises to the cytoplasm. It is found in the cell cortex. Its subcellular location is the perinuclear region. Its function is as follows. May play an important role in the terminal differentiation. The polypeptide is Metabotropic glutamate receptor-like protein A (grlA) (Dictyostelium discoideum (Social amoeba)).